Here is a 388-residue protein sequence, read N- to C-terminus: Alanine racemase (388 aa).

Catalysis depends on K44, which acts as the Proton acceptor; specific for D-alanine. N6-(pyridoxal phosphate)lysine is present on K44. R142 lines the substrate pocket. Y273 (proton acceptor; specific for L-alanine) is an active-site residue. M321 serves as a coordination point for substrate.

It belongs to the alanine racemase family. Pyridoxal 5'-phosphate is required as a cofactor.

The catalysed reaction is L-alanine = D-alanine. It functions in the pathway amino-acid biosynthesis; D-alanine biosynthesis; D-alanine from L-alanine: step 1/1. Catalyzes the interconversion of L-alanine and D-alanine. May also act on other amino acids. This Mycobacterium leprae (strain TN) protein is Alanine racemase (alr).